The primary structure comprises 399 residues: Succinate--CoA ligase [ADP-forming] subunit beta (399 aa).

The 246-residue stretch at 9–254 folds into the ATP-grasp domain; sequence KAVLAEFGVA…ESEEDPKEIE (246 aa). Residues Lys-46, 53 to 55, Glu-109, Ala-112, and Glu-117 each bind ATP; that span reads GRG. Mg(2+)-binding residues include Asn-209 and Asp-223. Substrate-binding positions include Asn-274 and 331 to 333; that span reads GIM.

This sequence belongs to the succinate/malate CoA ligase beta subunit family. Heterotetramer of two alpha and two beta subunits. It depends on Mg(2+) as a cofactor.

It carries out the reaction succinate + ATP + CoA = succinyl-CoA + ADP + phosphate. The enzyme catalyses GTP + succinate + CoA = succinyl-CoA + GDP + phosphate. Its pathway is carbohydrate metabolism; tricarboxylic acid cycle; succinate from succinyl-CoA (ligase route): step 1/1. Succinyl-CoA synthetase functions in the citric acid cycle (TCA), coupling the hydrolysis of succinyl-CoA to the synthesis of either ATP or GTP and thus represents the only step of substrate-level phosphorylation in the TCA. The beta subunit provides nucleotide specificity of the enzyme and binds the substrate succinate, while the binding sites for coenzyme A and phosphate are found in the alpha subunit. The polypeptide is Succinate--CoA ligase [ADP-forming] subunit beta (Phenylobacterium zucineum (strain HLK1)).